The following is a 478-amino-acid chain: Leukotoxin secretion protein D (478 aa).

Topologically, residues 1–59 (MKIWLSGIYEFFLRYKNTWAEVWKIRKELDHPNRKKDESEFLPAHLDLIETPVSKKPRL) are cytoplasmic. A helical transmembrane segment spans residues 60 to 80 (IAYLIMLFLVVAIVLASVSKV). Topologically, residues 81–478 (EIVATAPGKL…ESVTESLRER (398 aa)) are periplasmic.

It belongs to the membrane fusion protein (MFP) (TC 8.A.1) family.

The protein resides in the cell inner membrane. Involved in the transport of the Leukotoxin. The polypeptide is Leukotoxin secretion protein D (lktD) (Mannheimia haemolytica (Pasteurella haemolytica)).